We begin with the raw amino-acid sequence, 245 residues long: Acetylglutamate kinase (245 aa).

Substrate is bound by residues 41–42, R63, and N156; that span reads GG.

Belongs to the acetylglutamate kinase family. ArgB subfamily.

It localises to the cytoplasm. The enzyme catalyses N-acetyl-L-glutamate + ATP = N-acetyl-L-glutamyl 5-phosphate + ADP. It functions in the pathway amino-acid biosynthesis; L-arginine biosynthesis; N(2)-acetyl-L-ornithine from L-glutamate: step 2/4. Catalyzes the ATP-dependent phosphorylation of N-acetyl-L-glutamate. The chain is Acetylglutamate kinase from Streptococcus mutans serotype c (strain ATCC 700610 / UA159).